A 246-amino-acid chain; its full sequence is Small ribosomal subunit protein uS2 (246 aa).

This sequence belongs to the universal ribosomal protein uS2 family.

In Dictyoglomus turgidum (strain DSM 6724 / Z-1310), this protein is Small ribosomal subunit protein uS2.